The chain runs to 352 residues: Cysteinyl leukotriene receptor 1 (352 aa).

Topologically, residues 1 to 43 (MYLQGTKQTFLENMNGTENLTTSLINNTCHDTIDEFRNQVYST) are extracellular. Residues asparagine 15, asparagine 19, and asparagine 26 are each glycosylated (N-linked (GlcNAc...) asparagine). Residues 44 to 64 (MYSVISVVGFFGNSFVLYVLI) form a helical membrane-spanning segment. The Cytoplasmic segment spans residues 65–72 (KTYHEKSA). The chain crosses the membrane as a helical span at residues 73–93 (FQVYMINLAIADLLCVCTLPL). Residues 94–121 (RVVYYVHKGKWLFGDFLCRLTTYALYVN) are Extracellular-facing. A disulfide bridge links cysteine 111 with cysteine 188. A helical transmembrane segment spans residues 122-142 (LYCSIFFMTAMSFFRCVAIVF). The Cytoplasmic portion of the chain corresponds to 143–156 (PVQNINLVTQKKAR). The helical transmembrane segment at 157-177 (FVCIGIWIFVILTSSPFLMYK) threads the bilayer. The Extracellular portion of the chain corresponds to 178 to 208 (SYQDEKNNTKCFEPPQNNQAKKYVLILHYVS). Residue asparagine 184 is glycosylated (N-linked (GlcNAc...) asparagine). Residues 209-229 (LFFGFIIPFVTIIVCYTMIIL) traverse the membrane as a helical segment. Topologically, residues 230-245 (TLLKNTMKKNMPSRRK) are cytoplasmic. Residues 246 to 266 (AIGMIIVVTAAFLVSFMPYHI) traverse the membrane as a helical segment. Residues 267-291 (QRTIHLHLLHSETRPCDSVLRMQKS) lie on the Extracellular side of the membrane. A helical transmembrane segment spans residues 292 to 312 (VVITLSLAASNCCFDPLLYFF). At 313–352 (SGGNFRRRLSTFRKHSLSSMTYVPKKKASLPEKGEEICNE) the chain is on the cytoplasmic side.

It belongs to the G-protein coupled receptor 1 family. In terms of tissue distribution, widely expressed, with higher expression in the lung and skin, intermediate levels in the heart, kidney and stomach and lower levels in several other tissues. Isoform 1 is the most abundant form in all tested tissues.

The protein localises to the cell membrane. Receptor for cysteinyl leukotrienes mediating constriction of the microvascular smooth muscle during an inflammatory response. This response is mediated via a G-protein that activates a phosphatidylinositol-calcium second messenger system. The rank order of affinities for the leukotrienes is LTD4 &gt;&gt; LTE4 = LTC4 &gt;&gt; LTB4. This is Cysteinyl leukotriene receptor 1 (Cysltr1) from Mus musculus (Mouse).